Reading from the N-terminus, the 96-residue chain is MKWILVLALVCLAVEYSYSWKVSERCLKGHGKFQADQEIGNGLATAKGQCKGTDSDQKKAGKCDKHCTGVCLGSGGSCGDGSSQKPNKEDCYCKSK.

An N-terminal signal peptide occupies residues 1-19; that stretch reads MKWILVLALVCLAVEYSYS. 4 cysteine pairs are disulfide-bonded: Cys26-Cys71, Cys50-Cys78, Cys63-Cys91, and Cys67-Cys93.

Its subcellular location is the secreted. Functionally, salivary protein that inhibits host voltage-gated sodium channel Nav1.5/SCN5A. In Xenopsylla cheopis (Oriental rat flea), this protein is Salivary protein FS50.